A 32-amino-acid chain; its full sequence is Allergen Asp fl 1 (32 aa).

In Aspergillus flavus, this protein is Allergen Asp fl 1.